We begin with the raw amino-acid sequence, 256 residues long: 5'-nucleotidase SurE (256 aa).

Positions 8, 9, 40, and 92 each coordinate a divalent metal cation.

This sequence belongs to the SurE nucleotidase family. Requires a divalent metal cation as cofactor.

The protein resides in the cytoplasm. It carries out the reaction a ribonucleoside 5'-phosphate + H2O = a ribonucleoside + phosphate. Functionally, nucleotidase that shows phosphatase activity on nucleoside 5'-monophosphates. In Rhizobium meliloti (strain 1021) (Ensifer meliloti), this protein is 5'-nucleotidase SurE.